The primary structure comprises 356 residues: Histidinol-phosphate aminotransferase (356 aa).

Lys-214 carries the post-translational modification N6-(pyridoxal phosphate)lysine.

The protein belongs to the class-II pyridoxal-phosphate-dependent aminotransferase family. Histidinol-phosphate aminotransferase subfamily. As to quaternary structure, homodimer. It depends on pyridoxal 5'-phosphate as a cofactor.

The catalysed reaction is L-histidinol phosphate + 2-oxoglutarate = 3-(imidazol-4-yl)-2-oxopropyl phosphate + L-glutamate. It participates in amino-acid biosynthesis; L-histidine biosynthesis; L-histidine from 5-phospho-alpha-D-ribose 1-diphosphate: step 7/9. The sequence is that of Histidinol-phosphate aminotransferase from Escherichia coli O45:K1 (strain S88 / ExPEC).